The sequence spans 508 residues: Glycerol kinase (508 aa).

Thr15 lines the ADP pocket. 3 residues coordinate ATP: Thr15, Ser16, and Ser17. Thr15 provides a ligand contact to sn-glycerol 3-phosphate. Arg19 lines the ADP pocket. Positions 85, 86, 138, and 251 each coordinate sn-glycerol 3-phosphate. Glycerol contacts are provided by Arg85, Glu86, Tyr138, Asp251, and Gln252. Positions 273, 317, and 419 each coordinate ADP. Residues Thr273, Gly317, and Gly419 each contribute to the ATP site.

It belongs to the FGGY kinase family.

It carries out the reaction glycerol + ATP = sn-glycerol 3-phosphate + ADP + H(+). The protein operates within polyol metabolism; glycerol degradation via glycerol kinase pathway; sn-glycerol 3-phosphate from glycerol: step 1/1. Inhibited by fructose 1,6-bisphosphate (FBP). In terms of biological role, key enzyme in the regulation of glycerol uptake and metabolism. Catalyzes the phosphorylation of glycerol to yield sn-glycerol 3-phosphate. This chain is Glycerol kinase, found in Mycoplasma pneumoniae (strain ATCC 29342 / M129 / Subtype 1) (Mycoplasmoides pneumoniae).